A 240-amino-acid polypeptide reads, in one-letter code: Ribonuclease PH (240 aa).

Phosphate-binding positions include arginine 86 and 124–126 (GTR).

The protein belongs to the RNase PH family. As to quaternary structure, homohexameric ring arranged as a trimer of dimers.

It carries out the reaction tRNA(n+1) + phosphate = tRNA(n) + a ribonucleoside 5'-diphosphate. In terms of biological role, phosphorolytic 3'-5' exoribonuclease that plays an important role in tRNA 3'-end maturation. Removes nucleotide residues following the 3'-CCA terminus of tRNAs; can also add nucleotides to the ends of RNA molecules by using nucleoside diphosphates as substrates, but this may not be physiologically important. Probably plays a role in initiation of 16S rRNA degradation (leading to ribosome degradation) during starvation. The polypeptide is Ribonuclease PH (Rhodospirillum rubrum (strain ATCC 11170 / ATH 1.1.1 / DSM 467 / LMG 4362 / NCIMB 8255 / S1)).